Reading from the N-terminus, the 553-residue chain is 5'-nucleotidase domain-containing protein 2 (553 aa).

Positions 26 to 51 (SSSPSCPGCGPPGPGAHCPSTPRSAP) are disordered. Catalysis depends on Asp106, which acts as the Nucleophile. 3 residues coordinate Mg(2+): Asp106, Asp108, and Asp391. The active-site Proton donor is the Asp108.

It belongs to the 5'(3')-deoxyribonucleotidase family. Interacts with tyrosine 3-monooxygenase TH; the interaction results in reduced phosphorylation and decreased catalytic activity of TH. Expressed in eye iridocorneal angle.

The protein localises to the cytoplasm. Functionally, promotes dephosphorylation of tyrosine 3-monooxygenase TH which decreases TH catalytic activity and leads to reduced synthesis of catecholamines including dopamine, noradrenaline and adrenaline. The exact mechanism of activity is unknown but may act as a phosphatase or promote the activity of phosphatases or may inhibit phosphorylation by acting as a barrier to interfere with protein kinase access. The polypeptide is 5'-nucleotidase domain-containing protein 2 (Nt5dc2) (Rattus norvegicus (Rat)).